The sequence spans 105 residues: MKIHEQNKIRIKLQAYNHTLLDMSCKTIIDTAHRTKVQAKGPITLPAKRKIYCILRSPHVDKDSREHFEIRSYKKIIDIYEPSSQTIDSLMKLNIPSGVDIEIKL.

It belongs to the universal ribosomal protein uS10 family. As to quaternary structure, part of the 30S ribosomal subunit.

It is found in the plastid. Its subcellular location is the chloroplast. Involved in the binding of tRNA to the ribosomes. The sequence is that of Small ribosomal subunit protein uS10c from Gracilaria tenuistipitata var. liui (Red alga).